A 411-amino-acid polypeptide reads, in one-letter code: UPF0761 membrane protein PA0951 (411 aa).

Transmembrane regions (helical) follow at residues leucine 36–phenylalanine 56, histidine 92–isoleucine 112, phenylalanine 132–valine 152, leucine 174–valine 194, glycine 207–phenylalanine 229, and isoleucine 244–cysteine 264.

The protein belongs to the UPF0761 family.

Its subcellular location is the cell inner membrane. The sequence is that of UPF0761 membrane protein PA0951 from Pseudomonas aeruginosa (strain ATCC 15692 / DSM 22644 / CIP 104116 / JCM 14847 / LMG 12228 / 1C / PRS 101 / PAO1).